The chain runs to 228 residues: Cytochrome c oxidase subunit 2 (228 aa).

The Mitochondrial intermembrane portion of the chain corresponds to 1–14 (MANHSQLGFQDASS). A helical transmembrane segment spans residues 15–45 (PIMEELVEFHDHALIVALAICSLVLYLLAHM). Residues 46-58 (LMEKLSSNAVDAQ) are Mitochondrial matrix-facing. Residues 59–86 (EVELIWTILPAIVLVLLALPSLQILYMM) form a helical membrane-spanning segment. Residues 87–228 (DEIDEPDLTL…EAWSSLLSSS (142 aa)) lie on the Mitochondrial intermembrane side of the membrane. Residues His160, Cys195, Glu197, Cys199, His203, and Met206 each coordinate Cu cation. Mg(2+) is bound at residue Glu197.

The protein belongs to the cytochrome c oxidase subunit 2 family. In terms of assembly, component of the cytochrome c oxidase (complex IV, CIV), a multisubunit enzyme composed of 14 subunits. The complex is composed of a catalytic core of 3 subunits MT-CO1, MT-CO2 and MT-CO3, encoded in the mitochondrial DNA, and 11 supernumerary subunits COX4I, COX5A, COX5B, COX6A, COX6B, COX6C, COX7A, COX7B, COX7C, COX8 and NDUFA4, which are encoded in the nuclear genome. The complex exists as a monomer or a dimer and forms supercomplexes (SCs) in the inner mitochondrial membrane with NADH-ubiquinone oxidoreductase (complex I, CI) and ubiquinol-cytochrome c oxidoreductase (cytochrome b-c1 complex, complex III, CIII), resulting in different assemblies (supercomplex SCI(1)III(2)IV(1) and megacomplex MCI(2)III(2)IV(2)). Found in a complex with TMEM177, COA6, COX18, COX20, SCO1 and SCO2. Interacts with TMEM177 in a COX20-dependent manner. Interacts with COX20. Interacts with COX16. It depends on Cu cation as a cofactor.

Its subcellular location is the mitochondrion inner membrane. The enzyme catalyses 4 Fe(II)-[cytochrome c] + O2 + 8 H(+)(in) = 4 Fe(III)-[cytochrome c] + 2 H2O + 4 H(+)(out). Its function is as follows. Component of the cytochrome c oxidase, the last enzyme in the mitochondrial electron transport chain which drives oxidative phosphorylation. The respiratory chain contains 3 multisubunit complexes succinate dehydrogenase (complex II, CII), ubiquinol-cytochrome c oxidoreductase (cytochrome b-c1 complex, complex III, CIII) and cytochrome c oxidase (complex IV, CIV), that cooperate to transfer electrons derived from NADH and succinate to molecular oxygen, creating an electrochemical gradient over the inner membrane that drives transmembrane transport and the ATP synthase. Cytochrome c oxidase is the component of the respiratory chain that catalyzes the reduction of oxygen to water. Electrons originating from reduced cytochrome c in the intermembrane space (IMS) are transferred via the dinuclear copper A center (CU(A)) of subunit 2 and heme A of subunit 1 to the active site in subunit 1, a binuclear center (BNC) formed by heme A3 and copper B (CU(B)). The BNC reduces molecular oxygen to 2 water molecules using 4 electrons from cytochrome c in the IMS and 4 protons from the mitochondrial matrix. This chain is Cytochrome c oxidase subunit 2 (MT-CO2), found in Anas platyrhynchos (Mallard).